The chain runs to 86 residues: Small ribosomal subunit protein uS17 (86 aa).

Belongs to the universal ribosomal protein uS17 family. As to quaternary structure, part of the 30S ribosomal subunit.

Its function is as follows. One of the primary rRNA binding proteins, it binds specifically to the 5'-end of 16S ribosomal RNA. The polypeptide is Small ribosomal subunit protein uS17 (Tropheryma whipplei (strain TW08/27) (Whipple's bacillus)).